An 82-amino-acid polypeptide reads, in one-letter code: Large ribosomal subunit protein uL23 (82 aa).

The protein belongs to the universal ribosomal protein uL23 family. Part of the 50S ribosomal subunit. Contacts protein L29.

In terms of biological role, binds to 23S rRNA. One of the proteins that surrounds the polypeptide exit tunnel on the outside of the ribosome. This chain is Large ribosomal subunit protein uL23, found in Methanococcoides burtonii (strain DSM 6242 / NBRC 107633 / OCM 468 / ACE-M).